Reading from the N-terminus, the 443-residue chain is Large ribosomal subunit protein mL50 (443 aa).

The segment at 121–145 is disordered; sequence QPTRADAPEKIRDPNYEPATSGAGL. The span at 126-135 shows a compositional bias: basic and acidic residues; it reads DAPEKIRDPN.

The protein belongs to the mitochondrion-specific ribosomal protein mL50 family. In terms of assembly, component of the mitochondrial large ribosomal subunit (mt-LSU). Mature N.crassa 74S mitochondrial ribosomes consist of a small (37S) and a large (54S) subunit. The 37S small subunit contains a 16S ribosomal RNA (16S mt-rRNA) and 32 different proteins. The 54S large subunit contains a 23S rRNA (23S mt-rRNA) and 42 different proteins.

The protein localises to the mitochondrion. Its function is as follows. Component of the mitochondrial ribosome (mitoribosome), a dedicated translation machinery responsible for the synthesis of mitochondrial genome-encoded proteins, including at least some of the essential transmembrane subunits of the mitochondrial respiratory chain. The mitoribosomes are attached to the mitochondrial inner membrane and translation products are cotranslationally integrated into the membrane. This chain is Large ribosomal subunit protein mL50 (mrpl13), found in Neurospora crassa (strain ATCC 24698 / 74-OR23-1A / CBS 708.71 / DSM 1257 / FGSC 987).